We begin with the raw amino-acid sequence, 405 residues long: Argininosuccinate synthase (405 aa).

Residues 10-18 (AYSGGLDTS) and Ala-37 contribute to the ATP site. L-citrulline contacts are provided by Tyr-88 and Ser-93. Gly-118 provides a ligand contact to ATP. L-aspartate is bound by residues Thr-120, Asn-124, and Asp-125. L-citrulline is bound at residue Asn-124. L-citrulline is bound by residues Arg-128, Ser-179, Ser-188, Glu-264, and Tyr-276.

It belongs to the argininosuccinate synthase family. Type 1 subfamily. Homotetramer.

Its subcellular location is the cytoplasm. It carries out the reaction L-citrulline + L-aspartate + ATP = 2-(N(omega)-L-arginino)succinate + AMP + diphosphate + H(+). It participates in amino-acid biosynthesis; L-arginine biosynthesis; L-arginine from L-ornithine and carbamoyl phosphate: step 2/3. This is Argininosuccinate synthase from Pseudomonas aeruginosa (strain LESB58).